We begin with the raw amino-acid sequence, 292 residues long: 4-hydroxy-tetrahydrodipicolinate synthase (292 aa).

A pyruvate-binding site is contributed by T45. Residue Y133 is the Proton donor/acceptor of the active site. K161 (schiff-base intermediate with substrate) is an active-site residue. I203 provides a ligand contact to pyruvate.

The protein belongs to the DapA family. As to quaternary structure, homotetramer; dimer of dimers.

Its subcellular location is the cytoplasm. It catalyses the reaction L-aspartate 4-semialdehyde + pyruvate = (2S,4S)-4-hydroxy-2,3,4,5-tetrahydrodipicolinate + H2O + H(+). Its pathway is amino-acid biosynthesis; L-lysine biosynthesis via DAP pathway; (S)-tetrahydrodipicolinate from L-aspartate: step 3/4. Its function is as follows. Catalyzes the condensation of (S)-aspartate-beta-semialdehyde [(S)-ASA] and pyruvate to 4-hydroxy-tetrahydrodipicolinate (HTPA). The protein is 4-hydroxy-tetrahydrodipicolinate synthase of Shigella dysenteriae serotype 1 (strain Sd197).